We begin with the raw amino-acid sequence, 186 residues long: Probable GTP-binding protein EngB (186 aa).

The region spanning 18-186 is the EngB-type G domain; that stretch reads DKVEICFIGR…LKKLLASEFK (169 aa). GTP contacts are provided by residues 26 to 33, 52 to 56, 70 to 73, 137 to 140, and 166 to 168; these read GRSNVGKS, GRTQL, DLPG, TKID, and VSS. The Mg(2+) site is built by Ser33 and Thr54.

This sequence belongs to the TRAFAC class TrmE-Era-EngA-EngB-Septin-like GTPase superfamily. EngB GTPase family. The cofactor is Mg(2+).

Necessary for normal cell division and for the maintenance of normal septation. The polypeptide is Probable GTP-binding protein EngB (Mycoplasmopsis pulmonis (strain UAB CTIP) (Mycoplasma pulmonis)).